A 129-amino-acid polypeptide reads, in one-letter code: Antimicrobial peptide NK-lysin (129 aa).

The signal sequence occupies residues 1–6 (PGLAFS). Residues 7–46 (GLTPEHSALARAHPCDGEQFCQNLAPEDPQGDQLLQREEL) constitute a propeptide that is removed on maturation. One can recognise a Saposin B-type domain in the interval 46 to 126 (LGLICESCRK…VDIKICKEKT (81 aa)). 3 cysteine pairs are disulfide-bonded: Cys50–Cys122, Cys53–Cys116, and Cys81–Cys91. A propeptide spanning residues 125 to 129 (KTGLI) is cleaved from the precursor.

In terms of tissue distribution, cytotoxic T and NK cells.

It is found in the secreted. Functionally, may be an effector molecule of cytotoxic activity. High activity against E.coli and B.megaterium, moderate against A.calcoaceticus and S.pyogenes. No activity against P.aeruginosa, S.aureus and Salmonella. Has some antifungal activity against C.albicans. This chain is Antimicrobial peptide NK-lysin (NKL), found in Sus scrofa (Pig).